Reading from the N-terminus, the 943-residue chain is 2-oxoglutarate dehydrogenase E1 component (943 aa).

Belongs to the alpha-ketoglutarate dehydrogenase family. In terms of assembly, homodimer. Part of the 2-oxoglutarate dehydrogenase (OGDH) complex composed of E1 (2-oxoglutarate dehydrogenase), E2 (dihydrolipoamide succinyltransferase) and E3 (dihydrolipoamide dehydrogenase); the complex contains multiple copies of the three enzymatic components (E1, E2 and E3). It depends on thiamine diphosphate as a cofactor.

It catalyses the reaction N(6)-[(R)-lipoyl]-L-lysyl-[protein] + 2-oxoglutarate + H(+) = N(6)-[(R)-S(8)-succinyldihydrolipoyl]-L-lysyl-[protein] + CO2. E1 component of the 2-oxoglutarate dehydrogenase (OGDH) complex which catalyzes the decarboxylation of 2-oxoglutarate, the first step in the conversion of 2-oxoglutarate to succinyl-CoA and CO(2). The polypeptide is 2-oxoglutarate dehydrogenase E1 component (Shouchella clausii (strain KSM-K16) (Alkalihalobacillus clausii)).